A 139-amino-acid chain; its full sequence is D-ribose pyranase (139 aa).

Catalysis depends on His20, which acts as the Proton donor. Substrate is bound by residues Asp28, His106, and 128–130; that span reads YAN.

This sequence belongs to the RbsD / FucU family. RbsD subfamily. In terms of assembly, homodecamer.

It is found in the cytoplasm. It carries out the reaction beta-D-ribopyranose = beta-D-ribofuranose. It functions in the pathway carbohydrate metabolism; D-ribose degradation; D-ribose 5-phosphate from beta-D-ribopyranose: step 1/2. Its function is as follows. Catalyzes the interconversion of beta-pyran and beta-furan forms of D-ribose. The sequence is that of D-ribose pyranase from Aeromonas hydrophila subsp. hydrophila (strain ATCC 7966 / DSM 30187 / BCRC 13018 / CCUG 14551 / JCM 1027 / KCTC 2358 / NCIMB 9240 / NCTC 8049).